We begin with the raw amino-acid sequence, 255 residues long: CDP-diacylglycerol pyrophosphatase (255 aa).

A helical membrane pass occupies residues 5 to 27 (LLITVALIAVLALTTLVAWRYLF).

This sequence belongs to the Cdh family.

It is found in the cell inner membrane. It catalyses the reaction a CDP-1,2-diacyl-sn-glycerol + H2O = a 1,2-diacyl-sn-glycero-3-phosphate + CMP + 2 H(+). It participates in phospholipid metabolism; CDP-diacylglycerol degradation; phosphatidate from CDP-diacylglycerol: step 1/1. The polypeptide is CDP-diacylglycerol pyrophosphatase (Cronobacter sakazakii (strain ATCC BAA-894) (Enterobacter sakazakii)).